The chain runs to 246 residues: Dof zinc finger protein DOF4.7 (246 aa).

Composition is skewed to polar residues over residues 1–12 (MMTSSHQSNTTG) and 27–37 (QINNKEPSPAT). The segment at 1–39 (MMTSSHQSNTTGFKPRRIKTTAKPPRQINNKEPSPATQP) is disordered. The Dof-type zinc-finger motif lies at 41 to 95 (LKCPRCDSVNTKFCYYNNYSLSQPRHYCKNCRRYWTRGGALRNVPIGGSTRNKNK). Zn(2+)-binding residues include Cys-43, Cys-46, Cys-68, and Cys-71. The segment at 216–235 (GGATSGNHEDNDDGEGNLGN) is disordered.

As to quaternary structure, interacts with ZFP2. In terms of tissue distribution, highly expressed at the base of all organs of the flower, especially in the abscission zone (AZ) of petals, stamens and sepals. Expressed at low levels in sepals, filaments, stigmatic papillae, tips of young siliques, and at the base of pedicels and leaf trichomes.

Its subcellular location is the nucleus. Functionally, transcription factor that binds specifically to a 5'-AA[AG]G-3' consensus core sequence. Involved in the negative regulation of floral organ abscission by binding to the typical DOF 5'-AAAG-3' sequences in the promoter of ADPG2/PGAZAT, and by down-regulating its expression. ADPG2/PGAZAT is an abscission-related and cell wall hydrolyzing polygalacturonase. May act through the interaction with ZFP2, an abscission-related transcription factor. This chain is Dof zinc finger protein DOF4.7, found in Arabidopsis thaliana (Mouse-ear cress).